A 132-amino-acid chain; its full sequence is Large ribosomal subunit protein uL14 (132 aa).

It belongs to the universal ribosomal protein uL14 family. As to quaternary structure, part of the 50S ribosomal subunit. Forms a cluster with proteins L3 and L24e, part of which may contact the 16S rRNA in 2 intersubunit bridges.

In terms of biological role, binds to 23S rRNA. Forms part of two intersubunit bridges in the 70S ribosome. The protein is Large ribosomal subunit protein uL14 of Methanocaldococcus jannaschii (strain ATCC 43067 / DSM 2661 / JAL-1 / JCM 10045 / NBRC 100440) (Methanococcus jannaschii).